A 348-amino-acid polypeptide reads, in one-letter code: Anthranilate phosphoribosyltransferase (348 aa).

5-phospho-alpha-D-ribose 1-diphosphate-binding positions include Gly-89, Gly-92–Asp-93, Thr-97, Asn-99–Thr-102, Lys-117–Ser-125, and Ser-129. Anthranilate is bound at residue Gly-89. Position 101 (Ser-101) interacts with Mg(2+). Asn-120 is a binding site for anthranilate. Arg-175 serves as a coordination point for anthranilate. Mg(2+) is bound by residues Asp-233 and Glu-234.

Belongs to the anthranilate phosphoribosyltransferase family. In terms of assembly, homodimer. Mg(2+) is required as a cofactor.

The enzyme catalyses N-(5-phospho-beta-D-ribosyl)anthranilate + diphosphate = 5-phospho-alpha-D-ribose 1-diphosphate + anthranilate. It functions in the pathway amino-acid biosynthesis; L-tryptophan biosynthesis; L-tryptophan from chorismate: step 2/5. Its function is as follows. Catalyzes the transfer of the phosphoribosyl group of 5-phosphorylribose-1-pyrophosphate (PRPP) to anthranilate to yield N-(5'-phosphoribosyl)-anthranilate (PRA). This chain is Anthranilate phosphoribosyltransferase, found in Shewanella putrefaciens (strain CN-32 / ATCC BAA-453).